Reading from the N-terminus, the 1123-residue chain is Phytochrome 1 (1123 aa).

The span at 1–15 shows a compositional bias: low complexity; it reads MSTPKKTYSSTSSAK. The segment at 1–20 is disordered; sequence MSTPKKTYSSTSSAKSKAHS. Residues 216 to 395 form the GAF domain; sequence DIGLLCDTVV…VFGLQLNMEV (180 aa). A phytochromobilin-binding site is contributed by C321. 2 PAS domains span residues 610-681 and 744-815; these read VANE…LRGE and DYKT…TKFM. The Histidine kinase domain maps to 895–1115; that stretch reads YIRQEIKNPL…VVNVELPMAQ (221 aa).

Belongs to the phytochrome family. As to quaternary structure, homodimer. Post-translationally, contains one covalently linked phytochromobilin chromophore.

Its subcellular location is the cytoplasm. Regulatory photoreceptor which exists in two forms that are reversibly interconvertible by light: the Pr form that absorbs maximally in the red region of the spectrum and the Pfr form that absorbs maximally in the far-red region. Photoconversion of Pr to Pfr induces an array of morphogenetic responses, whereas reconversion of Pfr to Pr cancels the induction of those responses. Pfr controls the expression of a number of nuclear genes including those encoding the small subunit of ribulose-bisphosphate carboxylase, chlorophyll A/B binding protein, protochlorophyllide reductase, rRNA, etc. It also controls the expression of its own gene(s) in a negative feedback fashion. Mediates chloroplast avoidance movement in cytoplasm. In Physcomitrium patens (Spreading-leaved earth moss), this protein is Phytochrome 1 (PHY1).